A 194-amino-acid chain; its full sequence is Peptidyl-tRNA hydrolase (194 aa).

Residue tyrosine 17 coordinates tRNA. The Proton acceptor role is filled by histidine 22. TRNA-binding residues include tyrosine 68, asparagine 70, and asparagine 116.

The protein belongs to the PTH family. In terms of assembly, monomer.

The protein localises to the cytoplasm. The enzyme catalyses an N-acyl-L-alpha-aminoacyl-tRNA + H2O = an N-acyl-L-amino acid + a tRNA + H(+). In terms of biological role, hydrolyzes ribosome-free peptidyl-tRNAs (with 1 or more amino acids incorporated), which drop off the ribosome during protein synthesis, or as a result of ribosome stalling. Catalyzes the release of premature peptidyl moieties from peptidyl-tRNA molecules trapped in stalled 50S ribosomal subunits, and thus maintains levels of free tRNAs and 50S ribosomes. This is Peptidyl-tRNA hydrolase from Pseudomonas aeruginosa (strain LESB58).